We begin with the raw amino-acid sequence, 313 residues long: Formimidoylglutamase (313 aa).

Residues histidine 130, aspartate 155, histidine 157, aspartate 159, aspartate 241, and aspartate 243 each contribute to the Mn(2+) site.

The protein belongs to the arginase family. The cofactor is Mn(2+).

The enzyme catalyses N-formimidoyl-L-glutamate + H2O = formamide + L-glutamate. Its pathway is amino-acid degradation; L-histidine degradation into L-glutamate; L-glutamate from N-formimidoyl-L-glutamate (hydrolase route): step 1/1. Its function is as follows. Catalyzes the conversion of N-formimidoyl-L-glutamate to L-glutamate and formamide. This Salmonella typhi protein is Formimidoylglutamase.